A 268-amino-acid polypeptide reads, in one-letter code: 4-hydroxy-tetrahydrodipicolinate reductase (268 aa).

NAD(+) is bound by residues 10–15 (GSTGRM), glutamate 36, 99–101 (GTT), and 123–126 (APNM). Histidine 156 acts as the Proton donor/acceptor in catalysis. Histidine 157 contributes to the (S)-2,3,4,5-tetrahydrodipicolinate binding site. Catalysis depends on lysine 160, which acts as the Proton donor. 166–167 (GT) is a binding site for (S)-2,3,4,5-tetrahydrodipicolinate.

The protein belongs to the DapB family.

It is found in the cytoplasm. It catalyses the reaction (S)-2,3,4,5-tetrahydrodipicolinate + NAD(+) + H2O = (2S,4S)-4-hydroxy-2,3,4,5-tetrahydrodipicolinate + NADH + H(+). It carries out the reaction (S)-2,3,4,5-tetrahydrodipicolinate + NADP(+) + H2O = (2S,4S)-4-hydroxy-2,3,4,5-tetrahydrodipicolinate + NADPH + H(+). Its pathway is amino-acid biosynthesis; L-lysine biosynthesis via DAP pathway; (S)-tetrahydrodipicolinate from L-aspartate: step 4/4. Functionally, catalyzes the conversion of 4-hydroxy-tetrahydrodipicolinate (HTPA) to tetrahydrodipicolinate. This chain is 4-hydroxy-tetrahydrodipicolinate reductase, found in Nitrosomonas eutropha (strain DSM 101675 / C91 / Nm57).